A 295-amino-acid polypeptide reads, in one-letter code: 33 kDa chaperonin (295 aa).

2 disulfides stabilise this stretch: Cys-236–Cys-238 and Cys-269–Cys-272.

Belongs to the HSP33 family. Under oxidizing conditions two disulfide bonds are formed involving the reactive cysteines. Under reducing conditions zinc is bound to the reactive cysteines and the protein is inactive.

It is found in the cytoplasm. Its function is as follows. Redox regulated molecular chaperone. Protects both thermally unfolding and oxidatively damaged proteins from irreversible aggregation. Plays an important role in the bacterial defense system toward oxidative stress. The sequence is that of 33 kDa chaperonin from Geobacter sp. (strain M21).